Here is a 434-residue protein sequence, read N- to C-terminus: Cysteine proteinase 6 (434 aa).

The first 19 residues, 1-19 (MKVLSALCVLLVSVATAKQ), serve as a signal peptide directing secretion. Residues 20 to 113 (QLSELQYRNA…SEKVFGGVQA (94 aa)) constitute a propeptide, activation peptide. 2 disulfides stabilise this stretch: C133–C178 and C169–C211. C136 is a catalytic residue. N227 carries N-linked (GlcNAc...) asparagine glycosylation. A disulfide bond links C269 and C416. The active site involves H276. The interval 285–384 (SGSSGSQSQS…GGNSNSGDYP (100 aa)) is disordered. Over residues 288–347 (SGSQSQSAGSQSQSSNNNWSESSQSQDSNSWSQSSQSQSSQDSNSWSQSSQSQGSNSFTG) the composition is skewed to low complexity. A glycan (N-linked (GlcNAc...) asparagine) is linked at N305. Gly residues predominate over residues 348 to 358 (AGTGSGSGSVS). Residues 359-381 (GSGSASGSSSFSGSSNGGNSNSG) are compositionally biased toward low complexity. N394 is an active-site residue.

Belongs to the peptidase C1 family.

It is found in the lysosome. In Dictyostelium discoideum (Social amoeba), this protein is Cysteine proteinase 6 (cprF).